Here is a 415-residue protein sequence, read N- to C-terminus: UDP-N-acetylglucosamine 1-carboxyvinyltransferase (415 aa).

22-23 is a binding site for phosphoenolpyruvate; sequence KN. Arginine 92 contributes to the UDP-N-acetyl-alpha-D-glucosamine binding site. Residue cysteine 116 is the Proton donor of the active site. At cysteine 116 the chain carries 2-(S-cysteinyl)pyruvic acid O-phosphothioketal. Residues 121 to 125, aspartate 304, and valine 326 contribute to the UDP-N-acetyl-alpha-D-glucosamine site; that span reads RPIDL.

This sequence belongs to the EPSP synthase family. MurA subfamily.

The protein localises to the cytoplasm. The enzyme catalyses phosphoenolpyruvate + UDP-N-acetyl-alpha-D-glucosamine = UDP-N-acetyl-3-O-(1-carboxyvinyl)-alpha-D-glucosamine + phosphate. Its pathway is cell wall biogenesis; peptidoglycan biosynthesis. Cell wall formation. Adds enolpyruvyl to UDP-N-acetylglucosamine. This Halothermothrix orenii (strain H 168 / OCM 544 / DSM 9562) protein is UDP-N-acetylglucosamine 1-carboxyvinyltransferase.